We begin with the raw amino-acid sequence, 218 residues long: MIP18 family protein galla-1 (218 aa).

The disordered stretch occupies residues 1–59 (MLSYIKRKLSESDSGVSSVATVTSSCGGDSGRAGGTGSSESGTGSSSASISGRSQNADE). Residues 12-27 (SDSGVSSVATVTSSCG) show a composition bias toward low complexity. Ser14 carries the phosphoserine modification. Residues 28 to 37 (GDSGRAGGTG) show a composition bias toward gly residues. The span at 38-54 (SSESGTGSSSASISGRS) shows a compositional bias: low complexity. Residue Ser65 is modified to Phosphoserine.

This sequence belongs to the MIP18 family. In terms of assembly, component of the CGX complex composed of crb, galla (galla-1 or galla-2) and Xpd. Interacts with crb (via intracellular domain). Is not able to interact with Xpd in the absence of crb.

Its subcellular location is the apical cell membrane. The protein localises to the cytoplasm. It is found in the cytoskeleton. It localises to the spindle. Component of the crb-galla-Xpd (CGX) complex which is essential for proper mitotic chromosome segregation in early embryos. The CGX complex is also required for cell proliferation in developing wing disks. In the CGX complex, acts with crb to recruit Xpd thus forming the functional complex. The chain is MIP18 family protein galla-1 from Drosophila melanogaster (Fruit fly).